The chain runs to 530 residues: AP-4 complex subunit mu (530 aa).

Positions 164-187 are disordered; that stretch reads PKQGVKPIHSGSKNSSSGGSSLST. Residues 173-186 are compositionally biased toward low complexity; that stretch reads SGSKNSSSGGSSLS. Residues 227–527 enclose the MHD domain; it reads DNEIYIDLCE…ITDSKSFVSR (301 aa).

It belongs to the adaptor complexes medium subunit family. As to quaternary structure, may be part of the adaptor protein complex 4 (AP-4), a heterotetramer composed of two large adaptins (epsilon-type subunitand beta-type subunit), a medium adaptin (mu-type subunit) and a small adaptin (sigma-type).

The protein resides in the golgi apparatus. It localises to the trans-Golgi network membrane. It is found in the early endosome. Its function is as follows. Probable component of an adaptor protein complex. Adaptor protein complexes are vesicle coat components involved both in vesicle formation and cargo selection. They control the vesicular transport of proteins in different trafficking pathways. The sequence is that of AP-4 complex subunit mu (apm4) from Dictyostelium discoideum (Social amoeba).